A 343-amino-acid polypeptide reads, in one-letter code: Probable dolichyl-diphosphooligosaccharide--protein glycosyltransferase subunit 3A (343 aa).

Positions 1 to 22 are cleaved as a signal peptide; the sequence is MVIQTNLSYRFFILIVFLFTLA. Residues 23–185 lie on the Lumenal side of the membrane; sequence NPKSDSDLKN…TVCSIQRPPL (163 aa). N-linked (GlcNAc...) asparagine glycans are attached at residues N105, N108, and N146. A helical membrane pass occupies residues 186–206; the sequence is ISKTQIGIIVAIIIISTPILI. The Cytoplasmic portion of the chain corresponds to 207–220; that stretch reads KKILKGETLLHDHR. A helical membrane pass occupies residues 221 to 241; sequence IWLVGAVFVYFFSVSGTMHNI. Residues 242 to 273 are Lumenal-facing; it reads IREMPMYIKDYEDSSKFVFFIEESEMQLGAEG. Residues 274–294 traverse the membrane as a helical segment; it reads FFVGFLYTVVGLLLAFVTNVV. The Cytoplasmic portion of the chain corresponds to 295–304; that stretch reads VRVKKLDEQR. A helical transmembrane segment spans residues 305-325; sequence MAMLLALSISFWAVRKVVYLD. Residues 326-343 are Lumenal-facing; the sequence is NWKTGYEIYPYWPSSWRG.

It belongs to the OST3/OST6 family. As to quaternary structure, component of the oligosaccharyltransferase (OST) complex.

It is found in the endoplasmic reticulum membrane. In terms of biological role, subunit of the oligosaccharyl transferase (OST) complex that catalyzes the initial transfer of a defined glycan (Glc(3)Man(9)GlcNAc(2) in eukaryotes) from the lipid carrier dolichol-pyrophosphate to an asparagine residue within an Asn-X-Ser/Thr consensus motif in nascent polypeptide chains, the first step in protein N-glycosylation. N-glycosylation occurs cotranslationally and the complex associates with the Sec61 complex at the channel-forming translocon complex that mediates protein translocation across the endoplasmic reticulum (ER). All subunits are required for a maximal enzyme activity. The polypeptide is Probable dolichyl-diphosphooligosaccharide--protein glycosyltransferase subunit 3A (OST3A) (Arabidopsis thaliana (Mouse-ear cress)).